We begin with the raw amino-acid sequence, 273 residues long: Holocytochrome c-type synthase (273 aa).

A compositionally biased stretch (low complexity) spans 1 to 18 (MGLSASSPAATAQSAAEP). The disordered stretch occupies residues 1–39 (MGLSASSPAATAQSAAEPSKQHQVASPPSECPMHQEKMR). HRM repeat units follow at residues 30-35 (ECPMHQ) and 40-45 (GCPMHM).

It belongs to the cytochrome c-type heme lyase family.

It is found in the mitochondrion inner membrane. It catalyses the reaction holo-[cytochrome c] = apo-[cytochrome c] + heme b. In terms of biological role, lyase that catalyzes the covalent linking of the heme group to the cytochrome C apoprotein to produce the mature functional cytochrome. The polypeptide is Holocytochrome c-type synthase (HCCS) (Gallus gallus (Chicken)).